Consider the following 413-residue polypeptide: 5'-deoxyadenosine deaminase (413 aa).

Zn(2+) contacts are provided by histidine 57 and histidine 59. Positions 86 and 171 each coordinate substrate. Residue histidine 198 participates in Zn(2+) binding. The substrate site is built by glutamate 201 and aspartate 286. Aspartate 286 is a Zn(2+) binding site.

Belongs to the metallo-dependent hydrolases superfamily. MTA/SAH deaminase family. As to quaternary structure, homotetramer. Requires Zn(2+) as cofactor.

It catalyses the reaction 5'-deoxyadenosine + H2O + H(+) = 5'-deoxyinosine + NH4(+). It carries out the reaction S-adenosyl-L-homocysteine + H2O + H(+) = S-inosyl-L-homocysteine + NH4(+). The catalysed reaction is S-methyl-5'-thioadenosine + H2O + H(+) = S-methyl-5'-thioinosine + NH4(+). The enzyme catalyses adenosine + H2O + H(+) = inosine + NH4(+). It participates in amino-acid biosynthesis; S-adenosyl-L-methionine biosynthesis. In terms of biological role, catalyzes the deamination of three SAM-derived enzymatic products, namely 5'-deoxyadenosine, S-adenosyl-L-homocysteine, and 5'-methylthioadenosine, to produce the inosine analogs. Can also deaminate adenosine. The preferred substrate for this enzyme is 5'-deoxyadenosine, but all these substrates are efficiently deaminated. Likely functions in a S-adenosyl-L-methionine (SAM) recycling pathway from S-adenosyl-L-homocysteine (SAH) produced from SAM-dependent methylation reactions. May also be involved in the recycling of 5'-deoxyadenosine, whereupon the 5'-deoxyribose moiety of 5'-deoxyinosine is further metabolized to deoxyhexoses used for the biosynthesis of aromatic amino acids in methanogens. The protein is 5'-deoxyadenosine deaminase of Methanothrix thermoacetophila (strain DSM 6194 / JCM 14653 / NBRC 101360 / PT) (Methanosaeta thermophila).